The primary structure comprises 313 residues: Glutathione synthetase (313 aa).

The ATP-grasp domain maps to 125–309; the sequence is KIFVTEFADL…IASLFWDAVE (185 aa). An ATP-binding site is contributed by 151-207; it reads RKEFGDIIVKPLYGNGGAGIFHLHEADRNLASLLEMFGQLFREPYIVQRYLKDVRKG. The Mg(2+) site is built by E280 and N282.

This sequence belongs to the prokaryotic GSH synthase family. It depends on Mg(2+) as a cofactor. The cofactor is Mn(2+).

The enzyme catalyses gamma-L-glutamyl-L-cysteine + glycine + ATP = glutathione + ADP + phosphate + H(+). It participates in sulfur metabolism; glutathione biosynthesis; glutathione from L-cysteine and L-glutamate: step 2/2. This is Glutathione synthetase from Mesorhizobium japonicum (strain LMG 29417 / CECT 9101 / MAFF 303099) (Mesorhizobium loti (strain MAFF 303099)).